The primary structure comprises 423 residues: G protein-activated inward rectifier potassium channel 2 (423 aa).

Topologically, residues 1–89 (MAKLTESMTN…IFTTLVDLKW (89 aa)) are cytoplasmic. A phosphoserine mark is found at Ser-16 and Ser-23. The helical transmembrane segment at 90 to 114 (RFNLLIFVMVYTVTWLFFGMIWWLI) threads the bilayer. Residues 115-138 (AYIRGDMDHIEDPSWTPCVTNLNG) lie on the Extracellular side of the membrane. An intramembrane region (helical; Pore-forming) is located at residues 139-150 (FVSAFLFSIETE). An intramembrane region (pore-forming) is located at residues 151-157 (TTIGYGY). The short motif at 152-157 (TIGYGY) is the Selectivity filter element. Over 158-166 (RVITDKCPE) the chain is Extracellular. Residues 167 to 188 (GIILLLIQSVLGSIVNAFMVGC) form a helical membrane-spanning segment. At 189–423 (MFVKISQPKK…VANLENESKV (235 aa)) the chain is on the cytoplasmic side. A disordered region spans residues 390 to 423 (NQHAELETEEEEKNLEEQTERNGDVANLENESKV). Positions 420–423 (ESKV) match the PDZ-binding motif.

The protein belongs to the inward rectifier-type potassium channel (TC 1.A.2.1) family. KCNJ6 subfamily. As to quaternary structure, associates with KCNJ3/GIRK1 or KCNJ5/GRIK4 to form a G-protein-activated heteromultimer pore-forming unit. The resulting inward current is much larger. Interacts (via PDZ-binding motif) with SNX27 (via PDZ domain); the interaction is required when endocytosed to prevent degradation in lysosomes and promote recycling to the plasma membrane.

The protein resides in the membrane. It carries out the reaction K(+)(in) = K(+)(out). With respect to regulation, activated by phosphatidylinositol 4,5 biphosphate (PtdIns(4,5)P2). Its function is as follows. Inward rectifier potassium channels are characterized by a greater tendency to allow potassium to flow into the cell rather than out of it. Their voltage dependence is regulated by the concentration of extracellular potassium; as external potassium is raised, the voltage range of the channel opening shifts to more positive voltages. The inward rectification is mainly due to the blockage of outward current by internal magnesium. This potassium channel may be involved in the regulation of insulin secretion by glucose and/or neurotransmitters acting through G-protein-coupled receptors. The polypeptide is G protein-activated inward rectifier potassium channel 2 (KCNJ6) (Pongo abelii (Sumatran orangutan)).